Consider the following 3010-residue polypeptide: Genome polyprotein (3010 aa).

Residue serine 2 is modified to N-acetylserine; by host. The interval 2 to 23 (STNPKPQRKTKRNTNRRPQDVK) is interaction with STAT1. An interaction with EIF2AK2/PKR region spans residues 2 to 58 (STNPKPQRKTKRNTNRRPQDVKFPGGGQIVGGVYLLPRRGPRLGVRATRKASERSQP). Residues 2-59 (STNPKPQRKTKRNTNRRPQDVKFPGGGQIVGGVYLLPRRGPRLGVRATRKASERSQPR) are interaction with DDX3X. The tract at residues 2 to 75 (STNPKPQRKT…PKARRPEGRA (74 aa)) is disordered. The Cytoplasmic portion of the chain corresponds to 2 to 168 (STNPKPQRKT…EDGVNYATGN (167 aa)). 2 consecutive short sequence motifs (nuclear localization signal) follow at residues 5-13 (PKPQRKTKR) and 38-43 (PRRGPR). Residues 7 to 16 (PQRKTKRNTN) are compositionally biased toward basic residues. The segment covering 32-47 (GGVYLLPRRGPRLGVR) has biased composition (low complexity). A Phosphoserine; by host modification is found at serine 53. 2 short sequence motifs (nuclear localization signal) span residues 58-64 (PRGRRQP) and 66-71 (PKARRP). Residues 58-68 (PRGRRQPIPKA) are compositionally biased toward basic residues. Serine 99 carries the post-translational modification Phosphoserine; by host. Residues 112–152 (PRRRSRNLGKVIDTLTCGFADLMGYIPLVGAPLGGAARALA) form an important for endoplasmic reticulum and mitochondrial localization region. A Phosphoserine; by host PKA modification is found at serine 116. The segment at 122 to 173 (VIDTLTCGFADLMGYIPLVGAPLGGAARALAHGVRVLEDGVNYATGNLPGCS) is interaction with APOA2. The segment at 164-167 (YATG) is important for lipid droplets localization. The chain crosses the membrane as a helical span at residues 169–189 (LPGCSFSIFLLALLSCLTIPA). Positions 178–191 (LLALLSCLTIPASA) are cleaved as a propeptide — ER anchor for the core protein, removed in mature form by host signal peptidase. Over 190–358 (SAYEVRNVSG…AGAHWGVLAG (169 aa)) the chain is Lumenal. Asparagine 196, asparagine 209, asparagine 234, and asparagine 250 each carry an N-linked (GlcNAc...) asparagine; by host glycan. Positions 265–296 (LVGTAAFCSAMYVGDLCGSIFLVSQLFTFSPR) are important for fusion. Asparagine 305 carries N-linked (GlcNAc...) asparagine; by host glycosylation. The helical transmembrane segment at 359–379 (LAYYSMVGNWAKVLIVALLFA) threads the bilayer. Topologically, residues 380–725 (GVDGETHTTG…WEYILLLFLL (346 aa)) are lumenal. Residues 385-411 (THTTGRVAGHTTSGFTSLFSSGASQKI) are HVR1. Residues asparagine 417, asparagine 423, asparagine 430, and asparagine 448 are each glycosylated (N-linked (GlcNAc...) (high mannose) asparagine; by host). 4 disulfide bridges follow: cysteine 429-cysteine 552, cysteine 452-cysteine 459, cysteine 486-cysteine 494, and cysteine 503-cysteine 508. The interval 474–479 (YTKPNS) is HVR2. Asparagine 478 carries N-linked (GlcNAc...) asparagine; by host glycosylation. A CD81-binding 1 region spans residues 480–493 (SDQRPYCWHYAPRP). N-linked (GlcNAc...) (high mannose) asparagine; by host glycosylation is present at asparagine 532. Asparagine 540 is a glycosylation site (N-linked (GlcNAc...) asparagine; by host). The interval 544–551 (PPQGNWFG) is CD81-binding 2. N-linked (GlcNAc...) (high mannose) asparagine; by host glycosylation occurs at asparagine 556. Cysteines 564 and 569 form a disulfide. Asparagine 576 carries an N-linked (GlcNAc...) (high mannose) asparagine; by host glycan. Disulfide bonds link cysteine 581/cysteine 585, cysteine 597/cysteine 620, and cysteine 607/cysteine 644. N-linked (GlcNAc...) (high mannose) asparagine; by host glycans are attached at residues asparagine 623 and asparagine 645. Residues cysteine 652 and cysteine 677 are joined by a disulfide bond. Positions 660-671 (SELSPLLLSTTE) are PKR/eIF2-alpha phosphorylation homology domain (PePHD). The helical transmembrane segment at 726-746 (LADARVCACLWMMLLIAQAEA) threads the bilayer. The Lumenal portion of the chain corresponds to 747 to 757 (ALENLVVLNAA). A helical membrane pass occupies residues 758–778 (SVAGAHGILSFLVFFCAAWYI). The Cytoplasmic portion of the chain corresponds to 779–781 (KGR). The chain crosses the membrane as a helical span at residues 782-803 (LAPGAAYAFYGVWPLLLLLLAL). At 804–813 (PPRAYALDRE) the chain is on the lumenal side. A helical transmembrane segment spans residues 814-834 (MAASCGGAVLVGLVFLTLSPY). Topologically, residues 835–838 (YKVF) are cytoplasmic. A helical transmembrane segment spans residues 839 to 859 (LTRLIWWLQYFITRAEAHMQV). Residues 860–881 (WVPPLNVRGGRDAIILLTCAVH) are Lumenal-facing. Residues 882–902 (PELIFDITKLLLAILGPLMVL) traverse the membrane as a helical segment. Residues 903-1026 (QAGITRVPYF…SLEGQGWRLL (124 aa)) enclose the Peptidase C18 domain. At 903–1657 (QAGITRVPYF…CMSADLEVVT (755 aa)) the chain is on the cytoplasmic side. A protease NS2-3 region spans residues 904–1206 (AGITRVPYFV…PVESMETTMR (303 aa)). Cysteine 922 is lipidated: S-palmitoyl cysteine; by host. Residues 929 to 949 (AGGHYVQMAFMKLGALTGTYV) form an interaction with host SCPS1 region. Active-site for protease NS2 activity; shared with dimeric partner residues include histidine 952, glutamate 972, and cysteine 993. Residues 1027 to 1208 (APITAYSQQT…ESMETTMRSP (182 aa)) enclose the Peptidase S29 domain. Active-site charge relay system; for serine protease NS3 activity residues include histidine 1083 and aspartate 1107. Zn(2+) is bound by residues cysteine 1123 and cysteine 1125. The Charge relay system; for serine protease NS3 activity role is filled by serine 1165. Residues cysteine 1171 and histidine 1175 each contribute to the Zn(2+) site. Residues 1217 to 1369 (PAVPQTFQVA…PNIEEIGLSN (153 aa)) form the Helicase ATP-binding domain. 1230 to 1237 (APTGSGKS) contributes to the ATP binding site. Serine 1237 and glutamate 1317 together coordinate Mg(2+). Residues 1316–1319 (DECH) carry the DECH box motif. Residues 1486 to 1497 (QRRGRTGRGRSG) form an RNA-binding region. Residues 1658–1678 (STWVLVGGVLAALAAYCLTTG) form a helical membrane-spanning segment. The interval 1679-1690 (SVVIVGRIILSG) is NS3-binding. The Cytoplasmic portion of the chain corresponds to 1679–1805 (SVVIVGRIIL…SITSPLTTQN (127 aa)). Residues 1806 to 1824 (TLLFNILGGWVAAQLAPPS) traverse the membrane as a helical segment. Residues 1825–1828 (AASA) lie on the Lumenal side of the membrane. Residues 1829 to 1849 (FVGAGIAGAAVGSIGLGKVLV) form a helical membrane-spanning segment. Aspartate 1850 is a topological domain (cytoplasmic). A helical membrane pass occupies residues 1851–1871 (ILAGYGAGVAGALVAFKVMSG). Over 1872–1881 (EVPSTEDLVN) the chain is Lumenal. The helical transmembrane segment at 1882–1902 (LLPAILSPGALVVGVVCAAIL) threads the bilayer. Topologically, residues 1903–1972 (RRHVGPGEGA…WINEDCSTPC (70 aa)) are cytoplasmic. Residues cysteine 1968 and cysteine 1972 are each lipidated (S-palmitoyl cysteine; by host). An intramembrane segment occupies 1973-2002 (SGSWLRDVWDWICTVLTDFKTWLQSKLLPR). Over 2003–2989 (LPGVPFLSCQ…YHSLSRARPR (987 aa)) the chain is Cytoplasmic. Residues cysteine 2011, cysteine 2029, cysteine 2031, and cysteine 2052 each contribute to the Zn(2+) site. The tract at residues 2120–2208 (EFFTEVDGVR…ASSSASQLSA (89 aa)) is FKBP8-binding. The interval 2120–2332 (EFFTEVDGVR…PIPPPRRKRT (213 aa)) is transcriptional activation. The segment at 2135-2139 (PACKP) is interaction with non-structural protein 4A. The tract at residues 2187–2219 (KRRLARGSPPSLASSSASQLSAPSLKATCTTHH) is disordered. The tract at residues 2189–2441 (RLARGSPPSL…PCAAEESKLP (253 aa)) is interaction with host SKP2. Serine 2194 bears the Phosphoserine; by host; in p56 mark. Positions 2194 to 2211 (SPPSLASSSASQLSAPSL) are enriched in low complexity. Phosphoserine; by host; in p58 is present on residues serine 2197, serine 2201, serine 2204, serine 2207, and serine 2210. The segment at 2210–2249 (SLKATCTTHHDSPDADLIEANLLWRQEMGGNITRVESENK) is ISDR. The interaction with EIF2AK2/PKR stretch occupies residues 2210 to 2275 (SLKATCTTHH…REISVAAEIL (66 aa)). The interval 2249–2306 (KVVILDSFEPLHAEGDEREISVAAEILRKSRKFPSALPIWARPDYNPPLLESWKDPDY) is NS4B-binding. Residues 2322–2325 (PPIP) carry the SH3-binding motif. The short motif at 2326-2334 (PPRRKRTVV) is the Nuclear localization signal element. Lysine 2350 is covalently cross-linked (Glycyl lysine isopeptide (Lys-Gly) (interchain with G-Cter in ubiquitin)). Polar residues predominate over residues 2351 to 2365 (TFGSSGSSAVDSGTA). Positions 2351–2407 (TFGSSGSSAVDSGTATALPDLASDDGDKGSDVESYSSMPPLEGEPGDPDLSDGSWST) are disordered. A V3 region spans residues 2354–2377 (SSGSSAVDSGTATALPDLASDDGD). A phosphoserine; by host mark is found at serine 2448 and serine 2461. The region spanning 2633–2751 (PMGFSYDTRC…ICESAGTQED (119 aa)) is the RdRp catalytic domain. Residues aspartate 2639, aspartate 2737, and aspartate 2738 each coordinate Mg(2+). The chain crosses the membrane as a helical span at residues 2990-3010 (WFPLCLLLLSVGVGIYLLPNR).

It belongs to the hepacivirus polyprotein family. Homooligomer. Interacts with E1 (via C-terminus). Interacts with the non-structural protein 5A. Interacts (via N-terminus) with host STAT1 (via SH2 domain); this interaction results in decreased STAT1 phosphorylation and ubiquitin-mediated proteasome-dependent STAT1 degradation, leading to decreased IFN-stimulated gene transcription. Interacts with host STAT3; this interaction constitutively activates STAT3. Interacts with host LTBR receptor. Interacts with host TNFRSF1A receptor and possibly induces apoptosis. Interacts with host HNRPK. Interacts with host YWHAE. Interacts with host UBE3A/E6AP. Interacts with host DDX3X. Interacts with host APOA2. Interacts with host RXRA protein. Interacts with host SP110 isoform 3/Sp110b; this interaction sequesters the transcriptional corepressor SP110 away from the nucleus. Interacts with host CREB3 nuclear transcription protein; this interaction triggers cell transformation. Interacts with host ACY3. Interacts with host C1QR1. Interacts with host RBM24; this interaction, which enhances the interaction of the mature core protein with 5'-UTR, may inhibit viral translation and favor replication. Interacts with host EIF2AK2/PKR; this interaction induces the autophosphorylation of EIF2AK2. Part of the viral assembly initiation complex composed of NS2, E1, E2, NS3, NS4A, NS5A and the mature core protein. As to quaternary structure, forms a heterodimer with envelope glycoprotein E2. Interacts with mature core protein. Interacts with protease NS2. The heterodimer E1/E2 interacts with host CLDN1; this interaction plays a role in viral entry into host cell. Interacts with host SPSB2 (via C-terminus). Part of the viral assembly initiation complex composed of NS2, E1, E2, NS3, NS4A, NS5A and the mature core protein. Interacts with host NEURL3; this interaction prevents E1 binding to glycoprotein E2. In terms of assembly, forms a heterodimer with envelope glycoprotein E1. Interacts with host CD81 and SCARB1 receptors; these interactions play a role in viral entry into host cell. Interacts with host EIF2AK2/PKR; this interaction inhibits EIF2AK2 and probably allows the virus to evade the innate immune response. Interacts with host CD209/DC-SIGN and CLEC4M/DC-SIGNR. Interact with host SPCS1; this interaction is essential for viral particle assembly. Interacts with protease NS2. The heterodimer E1/E2 interacts with host CLDN1; this interaction plays a role in viral entry into host cell. Part of the viral assembly initiation complex composed of NS2, E1, E2, NS3, NS4A, NS5A and the mature core protein. Interacts with host SLC3A2/4F2hc; the interaction may facilitate viral entry into host cell. Interacts with human PLSCR1. Homohexamer. Homoheptamer. Interacts with protease NS2. As to quaternary structure, homodimer. Interacts with host SPCS1; this interaction is essential for viral particle assembly. Interacts with envelope glycoprotein E1. Interacts with envelope glycoprotein E2. Interacts with viroporin p7. Interacts with serine protease/helicase NS3. Part of the replication complex composed of NS2, NS3, NS4A, NS4B, NS5A and the RNA-directed RNA polymerase embedded in an ER-derived membranous web. Part of the viral assembly initiation complex composed of NS2, E1, E2, NS3, NS4A, NS5A and the mature core protein. In terms of assembly, interacts with protease NS2. Interacts with non-structural protein 4A; this interaction stabilizes the folding of NS3 serine protease. NS3-NS4A interaction is essential for NS3 activation and allows membrane anchorage of the latter. NS3/NS4A complex also prevents phosphorylation of host IRF3, thus preventing the establishment of dsRNA induced antiviral state. Interacts with host MAVS; this interaction leads to the cleavage and inhibition of host MAVS. Interacts with host TICAM1; this interaction leads to the cleavage and inhibition of host TICAM1. Interacts with host TANK-binding kinase/TBK1; this interaction results in the inhibition of the association between TBK1 and IRF3, which leads to the inhibition of IRF3 activation. Interacts with host RBM24. Part of the replication complex composed of NS2, NS3, NS4A, NS4B, NS5A and the RNA-directed RNA polymerase embedded in an ER-derived membranous web. Part of the viral assembly initiation complex composed of NS2, E1, E2, NS3, NS4A, NS5A and the mature core protein. Interacts with NS3 serine protease; this interaction stabilizes the folding of NS3 serine protease. NS3-NS4A interaction is essential for NS3 activation and allows membrane anchorage of the latter. Interacts with non-structural protein 5A (via N-terminus). Part of the replication complex composed of NS2, NS3, NS4A, NS4B, NS5A and the RNA-directed RNA polymerase embedded in an ER-derived membranous web. Part of the viral assembly initiation complex composed of NS2, E1, E2, NS3, NS4A, NS5A and the mature core protein. As to quaternary structure, homomultimer. Interacts with non-structural protein NS5A. Interacts with host PLA2G4C; this interaction likely initiates the recruitment of replication complexes to lipid droplets. Interacts with host STING; this interaction disrupts the interaction between STING and TBK1 thereby suppressing the interferon signaling. Part of the replication complex composed of NS2, NS3, NS4A, NS4B, NS5A and the RNA-directed RNA polymerase embedded in an ER-derived membranous web. In terms of assembly, monomer. Homodimer; dimerization is required for RNA-binding. Interacts with the mature core protein. Interacts (via N-terminus) with non-structural protein 4A. Interacts with non-structural protein 4B. Interacts (via region D2) with RNA-directed RNA polymerase. Part of the viral assembly initiation complex composed of NS2, E1, E2, NS3, NS4A, NS5A and the mature core protein. Part of the replication complex composed of NS2, NS3, NS4A, NS4B, NS5A and the RNA-directed RNA polymerase embedded in an ER-derived membranous web. Interacts with host GRB2. Interacts with host BIN1. Interacts with host PIK3R1. Interacts with host SRCAP. Interacts with host FKBP8. Interacts (via C-terminus) with host VAPB (via MSP domain). Interacts with host EIF2AK2/PKR; this interaction leads to disruption of EIF2AK2 dimerization by NS5A and probably allows the virus to evade the innate immune response. Interacts (via N-terminus) with host PACSIN2 (via N-terminus); this interaction attenuates protein kinase C alpha-mediated phosphorylation of PACSIN2 by disrupting the interaction between PACSIN2 and PRKCA. Interacts (via N-terminus) with host SRC kinase (via SH2 domain). Interacts with most Src-family kinases. Interacts with host IFI27 and SKP2; promotes the ubiquitin-mediated proteasomal degradation of NS5A. Interacts with host GPS2. Interacts with host TNFRSF21; this interaction allows the modulation by the virus of JNK, p38 MAPK, STAT3, and Akt signaling pathways in a DR6-dependent manner. Interacts (via N-terminus) with host CIDEB (via N-terminus); this interaction seems to regulate the association of HCV particles with APOE. Interacts with host CHKA/Choline Kinase-alpha; CHKA bridges host PI4KA and NS5A and potentiates NS5A-stimulated PI4KA activity, which then facilitates the targeting of the ternary complex to the ER for viral replication. Interacts with host SPSB2 (via C-terminus); this interaction targets NS5A for ubiquitination and degradation. Interacts with host RAB18; this interaction may promote the association of NS5A and other replicase components with lipid droplets. Interacts (via region D2) with host PPIA/CYPA; the interaction stimulates RNA-binding ability of NS5A and is dependent on the peptidyl-prolyl cis-trans isomerase activity of PPIA/CYPA. Interacts with host TRIM14; this interaction induces the degradation of NS5A. Homooligomer. Interacts with non-structural protein 5A. Interacts with host VAPB. Interacts with host PRK2/PKN2. Interacts with host HNRNPA1 and SEPT6; these interactions facilitate viral replication. Part of the replication complex composed of NS2, NS3, NS4A, NS4B, NS5A and the RNA-directed RNA polymerase. Zn(2+) serves as cofactor. Requires Mg(2+) as cofactor. Specific enzymatic cleavages in vivo yield mature proteins. The structural proteins, core, E1, E2 and p7 are produced by proteolytic processing by host signal peptidases. The core protein precursor is synthesized as a 23 kDa, which is retained in the ER membrane through the hydrophobic signal peptide. Cleavage by the signal peptidase releases the 21 kDa mature core protein. The cleavage of the core protein precursor occurs between aminoacids 176 and 188 but the exact cleavage site is not known. Some degraded forms of the core protein appear as well during the course of infection. The other proteins (p7, NS2, NS3, NS4A, NS4B, NS5A and NS5B) are cleaved by the viral proteases. Autoprocessing between NS2 and NS3 is mediated by the NS2 cysteine protease catalytic domain and regulated by the NS3 N-terminal domain. In terms of processing, phosphorylated by host PKC and PKA. Post-translationally, ubiquitinated; mediated by UBE3A and leading to core protein subsequent proteasomal degradation. Highly N-glycosylated. In terms of processing, palmitoylation is required for NS2/3 autoprocessing and E2 recruitment to membranes. Post-translationally, palmitoylated. This modification may play a role in its polymerization or in protein-protein interactions. Phosphorylated on serines in a basal form termed p56. p58 is a hyperphosphorylated form of p56. p56 and p58 coexist in the cell in roughly equivalent amounts. Hyperphosphorylation is dependent on the presence of NS4A. Host CSNK1A1/CKI-alpha or RPS6KB1 kinases may be responsible for NS5A phosphorylation. In terms of processing, tyrosine phosphorylation is essential for the interaction with host SRC. Post-translationally, the N-terminus is phosphorylated by host PRK2/PKN2.

It is found in the host endoplasmic reticulum membrane. Its subcellular location is the host mitochondrion membrane. The protein localises to the virion. The protein resides in the host cytoplasm. It localises to the host nucleus. It is found in the host lipid droplet. Its subcellular location is the virion membrane. The protein localises to the host mitochondrion. The protein resides in the host cell membrane. It localises to the host perinuclear region. The catalysed reaction is Hydrolysis of four peptide bonds in the viral precursor polyprotein, commonly with Asp or Glu in the P6 position, Cys or Thr in P1 and Ser or Ala in P1'.. The enzyme catalyses a ribonucleoside 5'-triphosphate + H2O = a ribonucleoside 5'-diphosphate + phosphate + H(+). It catalyses the reaction ATP + H2O = ADP + phosphate + H(+). It carries out the reaction RNA(n) + a ribonucleoside 5'-triphosphate = RNA(n+1) + diphosphate. Its activity is regulated as follows. Inhibited by the antiviral drug hexamethylene amiloride. Inhibited by amantadine. Inhibition by amantadine appears to be genotype-dependent. Also inhibited by long-alkyl-chain iminosugar derivatives. With respect to regulation, activity is up-regulated by PRK2/PKN2-mediated phosphorylation. Functionally, packages viral RNA to form a viral nucleocapsid, and promotes virion budding. Participates in the viral particle production as a result of its interaction with the non-structural protein 5A. Binds RNA and may function as a RNA chaperone to induce the RNA structural rearrangements taking place during virus replication. Modulates viral translation initiation by interacting with viral IRES and 40S ribosomal subunit. Affects various cell signaling pathways, host immunity and lipid metabolism. Prevents the establishment of cellular antiviral state by blocking the interferon-alpha/beta (IFN-alpha/beta) and IFN-gamma signaling pathways and by blocking the formation of phosphorylated STAT1 and promoting ubiquitin-mediated proteasome-dependent degradation of STAT1. Activates STAT3 leading to cellular transformation. Regulates the activity of cellular genes, including c-myc and c-fos. May repress the promoter of p53, and sequester CREB3 and SP110 isoform 3/Sp110b in the cytoplasm. Represses cell cycle negative regulating factor CDKN1A, thereby interrupting an important check point of normal cell cycle regulation. Targets transcription factors involved in the regulation of inflammatory responses and in the immune response: suppresses TNF-induced NF-kappa-B activation, and activates AP-1. Binds to dendritic cells (DCs) via C1QR1, resulting in down-regulation of T-lymphocytes proliferation. Alters lipid metabolism by interacting with hepatocellular proteins involved in lipid accumulation and storage. Induces up-regulation of FAS promoter activity, and thereby contributes to the increased triglyceride accumulation in hepatocytes (steatosis). Forms a heterodimer with envelope glycoprotein E2, which mediates virus attachment to the host cell, virion internalization through clathrin-dependent endocytosis and fusion with host membrane. Fusion with the host cell is most likely mediated by both E1 and E2, through conformational rearrangements of the heterodimer required for fusion rather than a classical class II fusion mechanism. E1/E2 heterodimer binds host apolipoproteins such as APOB and APOE thereby forming a lipo-viro-particle (LVP). APOE associated to the LVP allows the initial virus attachment to cell surface receptors such as the heparan sulfate proteoglycans (HSPGs), syndecan-1 (SDC1), syndecan-1 (SDC2), the low-density lipoprotein receptor (LDLR) and scavenger receptor class B type I (SCARB1). The cholesterol transfer activity of SCARB1 allows E2 exposure and binding of E2 to SCARB1 and the tetraspanin CD81. E1/E2 heterodimer binding on CD81 activates the epithelial growth factor receptor (EGFR) signaling pathway. Diffusion of the complex E1-E2-EGFR-SCARB1-CD81 to the cell lateral membrane allows further interaction with Claudin 1 (CLDN1) and occludin (OCLN) to finally trigger HCV entry. In terms of biological role, forms a heterodimer with envelope glycoprotein E1, which mediates virus attachment to the host cell, virion internalization through clathrin-dependent endocytosis and fusion with host membrane. Fusion with the host cell is most likely mediated by both E1 and E2, through conformational rearrangements of the heterodimer required for fusion rather than a classical class II fusion mechanism. The interaction between envelope glycoprotein E2 and host apolipoprotein E/APOE allows the proper assembly, maturation and infectivity of the viral particles. This interaction is probably promoted via the up-regulation of cellular autophagy by the virus. E1/E2 heterodimer binds host apolipoproteins such as APOB and APOE thereby forming a lipo-viro-particle (LVP). APOE associated to the LVP allows the initial virus attachment to cell surface receptors such as the heparan sulfate proteoglycans (HSPGs), syndecan-1 (SDC1), syndecan-1 (SDC2), the low-density lipoprotein receptor (LDLR) and scavenger receptor class B type I (SCARB1). The cholesterol transfer activity of SCARB1 allows E2 exposure and binding of E2 to SCARB1 and the tetraspanin CD81. E1/E2 heterodimer binding on CD81 activates the epithelial growth factor receptor (EGFR) signaling pathway. Diffusion of the complex E1-E2-EGFR-SCARB1-CD81 to the cell lateral membrane allows further interaction with Claudin 1 (CLDN1) and occludin (OCLN) to finally trigger HCV entry. Inhibits host EIF2AK2/PKR activation, preventing the establishment of an antiviral state. Viral ligand for CD209/DC-SIGN and CLEC4M/DC-SIGNR, which are respectively found on dendritic cells (DCs), and on liver sinusoidal endothelial cells and macrophage-like cells of lymph node sinuses. These interactions allow the capture of circulating HCV particles by these cells and subsequent transmission to permissive cells. Capture of circulating HCV particles by these SIGN+ cells may facilitate virus infection of proximal hepatocytes and lymphocyte subpopulations and may be essential for the establishment of persistent infection. Its function is as follows. Ion channel protein that acts as a viroporin and plays an essential role in the assembly, envelopment and secretion of viral particles. Regulates the host cell secretory pathway, which induces the intracellular retention of viral glycoproteins and favors assembly of viral particles. Creates a pore in acidic organelles and releases Ca(2+) and H(+) in the cytoplasm of infected cells, leading to a productive viral infection. High levels of cytoplasmic Ca(2+) may trigger membrane trafficking and transport of viral ER-associated proteins to viroplasms, sites of viral genome replication. This ionic imbalance induces the assembly of the inflammasome complex, which triggers the maturation of pro-IL-1beta into IL-1beta through the action of caspase-1. Targets also host mitochondria and induces mitochondrial depolarization. In addition of its role as a viroporin, acts as a lipid raft adhesion factor. Functionally, cysteine protease required for the proteolytic auto-cleavage between the non-structural proteins NS2 and NS3. The N-terminus of NS3 is required for the function of NS2 protease (active region NS2-3). Promotes the initiation of viral particle assembly by mediating the interaction between structural and non-structural proteins. Displays three enzymatic activities: serine protease with a chymotrypsin-like fold, NTPase and RNA helicase. NS3 serine protease, in association with NS4A, is responsible for the cleavages of NS3-NS4A, NS4A-NS4B, NS4B-NS5A and NS5A-NS5B. The NS3/NS4A complex prevents phosphorylation of host IRF3, thus preventing the establishment of dsRNA induced antiviral state. The NS3/NS4A complex induces host amino acid transporter component SLC3A2, thus contributing to HCV propagation. NS3 RNA helicase binds to RNA and unwinds both dsDNA and dsRNA in the 3' to 5' direction, and likely resolves RNA complicated stable secondary structures in the template strand. Binds a single ATP and catalyzes the unzipping of a single base pair of dsRNA. Inhibits host antiviral proteins TBK1 and IRF3 thereby preventing the establishment of an antiviral state. Cleaves host MAVS/CARDIF thereby preventing the establishment of an antiviral state. Cleaves host TICAM1/TRIF, thereby disrupting TLR3 signaling and preventing the establishment of an antiviral state. In terms of biological role, induces a specific membrane alteration that serves as a scaffold for the virus replication complex. This membrane alteration gives rise to the so-called ER-derived membranous web that contains the replication complex. NS4B self-interaction contributes to its function in membranous web formation. Promotes host TRIF protein degradation in a CASP8-dependent manner thereby inhibiting host TLR3-mediated interferon signaling. Disrupts the interaction between STING and TBK1 contributing to the inhibition of interferon signaling. Its function is as follows. Phosphorylated protein that is indispensable for viral replication and assembly. Both hypo- and hyperphosphorylated states are required for the viral life cycle. The hyperphosphorylated form of NS5A is an inhibitor of viral replication. Involved in RNA-binding and especially in binding to the viral genome. Zinc is essential for RNA-binding. Participates in the viral particle production as a result of its interaction with the mature viral core protein. Its interaction with host VAPB may target the viral replication complex to vesicles. Down-regulates viral IRES translation initiation. Mediates interferon resistance, presumably by interacting with and inhibiting host EIF2AK2/PKR. Prevents BIN1-induced apoptosis. Acts as a transcriptional activator of some host genes important for viral replication when localized in the nucleus. Via the interaction with host PACSIN2, modulates lipid droplet formation in order to promote virion assembly. Modulates TNFRSF21/DR6 signaling pathway for viral propagation. Functionally, RNA-dependent RNA polymerase that performs primer-template recognition and RNA synthesis during viral replication. Initiates RNA transcription/replication at a flavin adenine dinucleotide (FAD), resulting in a 5'- FAD cap on viral RNAs. In this way, recognition of viral 5' RNA by host pattern recognition receptors can be bypassed, thereby evading activation of antiviral pathways. This is Genome polyprotein from Hepatitis C virus genotype 1b (strain HC-J4) (HCV).